The primary structure comprises 534 residues: Peptide chain release factor 3 (534 aa).

In terms of domain architecture, tr-type G spans 9–278 (SRRRTFAIIS…FFVEHAPSPQ (270 aa)). Residues 18-25 (SHPDAGKT), 86-90 (DTPGH), and 140-143 (NKLD) each bind GTP.

It belongs to the TRAFAC class translation factor GTPase superfamily. Classic translation factor GTPase family. PrfC subfamily.

It is found in the cytoplasm. Increases the formation of ribosomal termination complexes and stimulates activities of RF-1 and RF-2. It binds guanine nucleotides and has strong preference for UGA stop codons. It may interact directly with the ribosome. The stimulation of RF-1 and RF-2 is significantly reduced by GTP and GDP, but not by GMP. The protein is Peptide chain release factor 3 of Stenotrophomonas maltophilia (strain K279a).